The chain runs to 1077 residues: Semaphorin-5A (1077 aa).

Positions 1–21 are cleaved as a signal peptide; it reads MKGACILAWLFSSLGVWRLAR. The Extracellular segment spans residues 22–971; sequence PETQDPAKCQ…RCGEFNMFHM (950 aa). Residues 35 to 484 enclose the Sema domain; that stretch reads HPVVSYKEIG…LQEHVAKIPL (450 aa). 2 disulfides stabilise this stretch: C104–C114 and C131–C140. N147, N168, N227, and N277 each carry an N-linked (GlcNAc...) asparagine glycan. 2 disulfides stabilise this stretch: C254–C357 and C278–C320. 2 N-linked (GlcNAc...) asparagine glycosylation sites follow: N323 and N367. Intrachain disulfides connect C487–C504 and C496–C513. 2 N-linked (GlcNAc...) asparagine glycosylation sites follow: N536 and N591. TSP type-1 domains follow at residues 540–593, 595–651, 653–702, 707–765, 784–839, 841–896, and 897–944; these read DGSF…TNCS, NGGW…LLCP, HVFW…NACP, TTPW…GCST, NGAW…LPCP, DGVW…QTCP, and ESWS…VFDS. Cystine bridges form between C607/C644, C611/C650, C622/C634, C665/C696, C669/C701, and C680/C686. N717 carries N-linked (GlcNAc...) asparagine glycosylation. 6 disulfides stabilise this stretch: C796–C833, C800–C838, C811–C823, C853–C890, C857–C895, and C868–C880. Residue N933 is glycosylated (N-linked (GlcNAc...) asparagine). A helical membrane pass occupies residues 972–992; that stretch reads FHMMAVGLSSSILGCLLTLLV. Residues 993–1077 are Cytoplasmic-facing; the sequence is YTYCQRYQQQ…FTDLNNYDEY (85 aa).

The protein belongs to the semaphorin family. As to quaternary structure, binds PLXNB3. In adult, detected in liver, brain, kidney, heart, lung and spleen.

It localises to the membrane. Its function is as follows. Bifunctional axonal guidance cue regulated by sulfated proteoglycans; attractive effects result from interactions with heparan sulfate proteoglycans (HSPGs), while the inhibitory effects depend on interactions with chondroitin sulfate proteoglycans (CSPGs). Ligand for receptor PLXNB3. In glioma cells, SEMA5A stimulation of PLXNB3 results in the disassembly of F-actin stress fibers, disruption of focal adhesions and cellular collapse as well as inhibition of cell migration and invasion through ARHGDIA-mediated inactivation of RAC1. May promote angiogenesis by increasing endothelial cell proliferation and migration and inhibiting apoptosis. This chain is Semaphorin-5A (Sema5a), found in Mus musculus (Mouse).